A 777-amino-acid chain; its full sequence is Ribosome biogenesis protein ERB1 (777 aa).

Positions 1 to 122 (MAPTAPAKKR…RPNYRVVEDA (122 aa)) are disordered. Over residues 36-67 (SEDDSDFVASGDEDEEDEDEDEDEDKDEDDEH) the composition is skewed to acidic residues. WD repeat units lie at residues 430 to 469 (GHEG…QVWA), 473 to 513 (SSDE…PEVE), 562 to 604 (TVRS…SQIP), 606 to 645 (RKLS…LVKV), 648 to 687 (PGAR…RPYK), 691 to 731 (FHPQ…DLME), and 747 to 777 (VDSL…RLWM).

It belongs to the WD repeat BOP1/ERB1 family. As to quaternary structure, component of the NOP7 complex, composed of ERB1, NOP7 and YTM1. The complex is held together by ERB1, which interacts with NOP7 via its N-terminal domain and with YTM1 via a high-affinity interaction between the seven-bladed beta-propeller domains of the 2 proteins. The NOP7 complex associates with the 66S pre-ribosome.

The protein resides in the nucleus. Its subcellular location is the nucleolus. The protein localises to the nucleoplasm. Its function is as follows. Component of the NOP7 complex, which is required for maturation of the 25S and 5.8S ribosomal RNAs and formation of the 60S ribosome. The chain is Ribosome biogenesis protein ERB1 from Pyricularia oryzae (strain 70-15 / ATCC MYA-4617 / FGSC 8958) (Rice blast fungus).